We begin with the raw amino-acid sequence, 504 residues long: Catalase (504 aa).

Catalysis depends on residues His56 and Asn129. Tyr339 provides a ligand contact to heme.

This sequence belongs to the catalase family. As to quaternary structure, homodimer. It depends on heme as a cofactor.

The enzyme catalyses 2 H2O2 = O2 + 2 H2O. Its function is as follows. Decomposes hydrogen peroxide into water and oxygen; serves to protect cells from the toxic effects of hydrogen peroxide. This Staphylococcus epidermidis protein is Catalase (katA).